A 267-amino-acid polypeptide reads, in one-letter code: Undecaprenyl-diphosphatase (267 aa).

Helical transmembrane passes span 4 to 24 (LYAL…ISST), 41 to 61 (FWKS…IFVF), 69 to 89 (LDIW…GLFV), 96 to 116 (LFNG…FILI), 173 to 193 (AAEF…AYSI), 207 to 227 (IPLG…IKFF), and 239 to 259 (FGIY…SGIL).

This sequence belongs to the UppP family.

It localises to the cell inner membrane. It carries out the reaction di-trans,octa-cis-undecaprenyl diphosphate + H2O = di-trans,octa-cis-undecaprenyl phosphate + phosphate + H(+). Functionally, catalyzes the dephosphorylation of undecaprenyl diphosphate (UPP). Confers resistance to bacitracin. The sequence is that of Undecaprenyl-diphosphatase from Campylobacter jejuni subsp. jejuni serotype O:23/36 (strain 81-176).